The chain runs to 180 residues: Acireductone dioxygenase (180 aa).

Residues His97, His99, Glu103, and His141 each contribute to the Fe(2+) site. Residues His97, His99, Glu103, and His141 each coordinate Ni(2+).

Belongs to the acireductone dioxygenase (ARD) family. As to quaternary structure, monomer. It depends on Fe(2+) as a cofactor. Requires Ni(2+) as cofactor.

The catalysed reaction is 1,2-dihydroxy-5-(methylsulfanyl)pent-1-en-3-one + O2 = 3-(methylsulfanyl)propanoate + CO + formate + 2 H(+). It carries out the reaction 1,2-dihydroxy-5-(methylsulfanyl)pent-1-en-3-one + O2 = 4-methylsulfanyl-2-oxobutanoate + formate + 2 H(+). It participates in amino-acid biosynthesis; L-methionine biosynthesis via salvage pathway; L-methionine from S-methyl-5-thio-alpha-D-ribose 1-phosphate: step 5/6. Functionally, catalyzes 2 different reactions between oxygen and the acireductone 1,2-dihydroxy-3-keto-5-methylthiopentene (DHK-MTPene) depending upon the metal bound in the active site. Fe-containing acireductone dioxygenase (Fe-ARD) produces formate and 2-keto-4-methylthiobutyrate (KMTB), the alpha-ketoacid precursor of methionine in the methionine recycle pathway. Ni-containing acireductone dioxygenase (Ni-ARD) produces methylthiopropionate, carbon monoxide and formate, and does not lie on the methionine recycle pathway. The protein is Acireductone dioxygenase of Acidiphilium cryptum (strain JF-5).